A 307-amino-acid chain; its full sequence is Putative transcription factor bHLH086 (307 aa).

Disordered regions lie at residues 1 to 49 (MSLI…DHQN) and 167 to 215 (HEST…QSLA). 2 stretches are compositionally biased toward polar residues: residues 12–28 (NYIS…SPQN) and 183–197 (GENT…SGTN). A basic motif region spans residues 207–220 (SPKDPQSLAAKNRR). The 50-residue stretch at 207-256 (SPKDPQSLAAKNRRERISERLKVLQELVPNGTKVDLVTMLEKAIGYVKFL) folds into the bHLH domain. Positions 221–256 (ERISERLKVLQELVPNGTKVDLVTMLEKAIGYVKFL) are helix-loop-helix motif.

As to quaternary structure, homodimer. Forms heterodimers with RHD6. Interacts with TIFY10B/JAZ2, TIFY6A/JAZ4, TIFY5A/JAZ8, TIFY7/JAZ9 and TIFY9/JAZ10.

Its subcellular location is the nucleus. Its function is as follows. Transcription factor that is specifically required for the development of root hairs. Acts with RHD6 to positively regulate root hair development. Acts downstream of genes that regulate epidermal pattern formation, such as GL2. Acts with RHD6 as transcription factor that integrates a jasmonate (JA) signaling pathway that stimulates root hair growth. The sequence is that of Putative transcription factor bHLH086 from Arabidopsis thaliana (Mouse-ear cress).